The sequence spans 416 residues: Notoamide biosynthesis cluster protein N' (416 aa).

An N-terminal signal peptide occupies residues 1–16 (MRAALLTLAFTALAAA). Asparagine 119 and asparagine 262 each carry an N-linked (GlcNAc...) asparagine glycan.

Functionally, part of the gene cluster that mediates the biosynthesis of notoamide, a fungal indole alkaloid that belongs to a family of natural products containing a characteristic bicyclo[2.2.2]diazaoctane core. The first step of notoamide biosynthesis involves coupling of L-proline and L-tryptophan by the bimodular NRPS notE', to produce cyclo-L-tryptophan-L-proline called brevianamide F. The reverse prenyltransferase notF' then acts as a deoxybrevianamide E synthase and converts brevianamide F to deoxybrevianamide E via reverse prenylation at C-2 of the indole ring leading to the bicyclo[2.2.2]diazaoctane core. Deoxybrevianamide E is further hydroxylated at C-6 of the indole ring, likely catalyzed by the cytochrome P450 monooxygenase notG', to yield 6-hydroxy-deoxybrevianamide E. 6-hydroxy-deoxybrevianamide E is a specific substrate of the prenyltransferase notC' for normal prenylation at C-7 to produce 6-hydroxy-7-prenyl-deoxybrevianamide, also called notoamide S. As the proposed pivotal branching point in notoamide biosynthesis, notoamide S can be diverted to notoamide E through an oxidative pyran ring closure putatively catalyzed by either notH' cytochrome P450 monooxygenase or the notD' FAD-linked oxidoreductase. This step would be followed by an indole 2,3-epoxidation-initiated pinacol-like rearrangement catalyzed by the notB' FAD-dependent monooxygenase leading to the formation of notoamide C and notoamide D. On the other hand notoamide S is converted to notoamide T by notH' (or notD'), a bifunctional oxidase that also functions as the intramolecular Diels-Alderase responsible for generation of (-)-notoamide T. To generate antipodal (+)-notoaminide T, notH (or notD) in Aspergillus strain MF297-2 is expected to catalyze a Diels-Alder reaction leading to the opposite stereochemistry. The remaining oxidoreductase notD' (or notH') likely catalyzes the oxidative pyran ring formation to yield (-)-stephacidin A. The FAD-dependent monooxygenase notI' is highly similar to notB' and is predicted to catalyze a similar conversion from (-)-stephacidin A to (+)-notoamide B via the 2,3-epoxidation of (-)-stephacidin A followed by a pinacol-type rearrangement. Finally, it remains unclear which enzyme could be responsible for the final hydroxylation steps leading to notoamide A and sclerotiamide. The function of notN' in the notoamide biosynthesis has not been determined yet. In Aspergillus versicolor, this protein is Notoamide biosynthesis cluster protein N'.